The primary structure comprises 208 residues: MDTSHKVYNFECPFELAKVEMKAISNTMHKVDDFVSTIDVNFSDSELDDKVDDLEIKIEKVSGPLLNRYLGSVGKVVFLIFSFLFFGSIKLVLKCFYHLFKCVFCNPLTRCFCSIIFTIIFYTLLFVSCYLLWHYFGDVIIQTIKDINNNRSVNFTNETENFNSKVETTTMKIIQLIFSKSDNNGVEHIIKSANVTSGQTANFTLLNG.

This is an uncharacterized protein from Saccharum officinarum (Sugarcane).